A 413-amino-acid chain; its full sequence is Multifunctional CCA protein (413 aa).

Residues glycine 8 and arginine 11 each contribute to the ATP site. The CTP site is built by glycine 8 and arginine 11. Mg(2+) contacts are provided by aspartate 21 and aspartate 23. Residues arginine 91, arginine 143, and arginine 146 each contribute to the ATP site. CTP is bound by residues arginine 91, arginine 143, and arginine 146. Positions 232–333 constitute an HD domain; sequence TGVHVMMVID…VRLLERADAL (102 aa).

This sequence belongs to the tRNA nucleotidyltransferase/poly(A) polymerase family. Bacterial CCA-adding enzyme type 1 subfamily. As to quaternary structure, monomer. Can also form homodimers and oligomers. It depends on Mg(2+) as a cofactor. Ni(2+) serves as cofactor.

The enzyme catalyses a tRNA precursor + 2 CTP + ATP = a tRNA with a 3' CCA end + 3 diphosphate. The catalysed reaction is a tRNA with a 3' CCA end + 2 CTP + ATP = a tRNA with a 3' CCACCA end + 3 diphosphate. Its function is as follows. Catalyzes the addition and repair of the essential 3'-terminal CCA sequence in tRNAs without using a nucleic acid template. Adds these three nucleotides in the order of C, C, and A to the tRNA nucleotide-73, using CTP and ATP as substrates and producing inorganic pyrophosphate. tRNA 3'-terminal CCA addition is required both for tRNA processing and repair. Also involved in tRNA surveillance by mediating tandem CCA addition to generate a CCACCA at the 3' terminus of unstable tRNAs. While stable tRNAs receive only 3'-terminal CCA, unstable tRNAs are marked with CCACCA and rapidly degraded. This Burkholderia pseudomallei (strain K96243) protein is Multifunctional CCA protein.